Reading from the N-terminus, the 324-residue chain is MTISLDSLRLDPPVLLAPMAGITDLPFRRMVARFGAGLVVSEMVASGEMLTAKPSVRAKAQAELTAGLPTSVQLAGREAAPMAEAAKIVADMGAEIIDINMGCPAKKVTGGLSGAALMRNPDHALRLIEAVVGAVDLPVTLKMRLGWDEDQLNAAEIAARAEAAGVKMIVIHGRTRMQFYTGAADWRAIAAVRAAVSVPVVANGDITDAASARRALDQSGAAGVMVGRGAQGAPWRLAQIAAALFGKADPKLPSGSEFSDFVSEHYEAILSFYGRDLGLRIARKHLGWYAEAAAAPLRAEMMRATDPAATLALIRSAFSEREAA.

FMN-binding positions include 18 to 20 (PMA) and Gln73. The Proton donor role is filled by Cys103. FMN-binding positions include Lys142, 203 to 205 (NGD), and 227 to 228 (GR).

Belongs to the Dus family. The cofactor is FMN.

It catalyses the reaction a 5,6-dihydrouridine in tRNA + NAD(+) = a uridine in tRNA + NADH + H(+). It carries out the reaction a 5,6-dihydrouridine in tRNA + NADP(+) = a uridine in tRNA + NADPH + H(+). Catalyzes the synthesis of 5,6-dihydrouridine (D), a modified base found in the D-loop of most tRNAs, via the reduction of the C5-C6 double bond in target uridines. The sequence is that of Probable tRNA-dihydrouridine synthase (dus) from Rhodobacter capsulatus (strain ATCC BAA-309 / NBRC 16581 / SB1003).